A 379-amino-acid polypeptide reads, in one-letter code: Putative FBD-associated F-box protein At5g38570 (379 aa).

In terms of domain architecture, F-box spans 1–47 (MDNINGLPDDLLVKILSFVPTYVAVSTCVLSKRWEFLWMWLPNLEFV). In terms of domain architecture, FBD spans 295–345 (CWNQPSSVLECLLSSLKILNWSAYFGRPQDRDIAVYILKNACHLKTATFLT).

The sequence is that of Putative FBD-associated F-box protein At5g38570 from Arabidopsis thaliana (Mouse-ear cress).